The following is a 328-amino-acid chain: Nickel import system permease protein NikB (328 aa).

6 helical membrane-spanning segments follow: residues 11–31 (LIQM…LMKL), 104–124 (LLIS…LGII), 139–159 (VIST…LLFI), 170–190 (ILSQ…AYII), 229–249 (ILPI…GTVV), and 279–299 (VLFI…LTLL). In terms of domain architecture, ABC transmembrane type-1 spans 100–297 (APITLLISFS…IINTIADLLT (198 aa)).

Belongs to the binding-protein-dependent transport system permease family. OppBC subfamily. In terms of assembly, the complex is composed of two ATP-binding proteins (NikD and NikE), two transmembrane proteins (NikB and NikC) and a solute-binding protein (NikA).

It is found in the cell membrane. Part of the ABC transporter complex NikABCDE (Opp2) involved in nickel import. Probably responsible for the translocation of the substrate across the membrane. The polypeptide is Nickel import system permease protein NikB (Staphylococcus aureus (strain MRSA252)).